We begin with the raw amino-acid sequence, 142 residues long: Putative regulator of rDNA transcription protein 16 (142 aa).

Transmembrane regions (helical) follow at residues 19-39 (ILLT…VMVA), 84-104 (FLLF…AIFL), and 111-131 (SIFI…GLCH).

It localises to the membrane. Its function is as follows. Identified in a screen for mutants with decreased levels of rDNA transcription. The chain is Putative regulator of rDNA transcription protein 16 (RRT16) from Saccharomyces cerevisiae (strain ATCC 204508 / S288c) (Baker's yeast).